We begin with the raw amino-acid sequence, 273 residues long: Tryptophan synthase alpha chain (273 aa).

Residues Glu49 and Asp60 each act as proton acceptor in the active site.

The protein belongs to the TrpA family. As to quaternary structure, tetramer of two alpha and two beta chains.

It catalyses the reaction (1S,2R)-1-C-(indol-3-yl)glycerol 3-phosphate + L-serine = D-glyceraldehyde 3-phosphate + L-tryptophan + H2O. Its pathway is amino-acid biosynthesis; L-tryptophan biosynthesis; L-tryptophan from chorismate: step 5/5. In terms of biological role, the alpha subunit is responsible for the aldol cleavage of indoleglycerol phosphate to indole and glyceraldehyde 3-phosphate. The chain is Tryptophan synthase alpha chain from Thiobacillus denitrificans (strain ATCC 25259 / T1).